The primary structure comprises 49 residues: Defensin Tk-AMP-D1 (49 aa).

4 disulfide bridges follow: cysteine 3–cysteine 49, cysteine 14–cysteine 34, cysteine 20–cysteine 43, and cysteine 24–cysteine 45.

In terms of biological role, has weak antifungal activity against F.graminearum and F.verticillioides below 30 ug/ml, but not against A.consortiale B.cinerea, H.sativum, F.culmorum, C.graminicola and D.maydis. The chain is Defensin Tk-AMP-D1 from Triticum kiharae (Wheat).